The chain runs to 446 residues: MGKKDGKRQLMSDDDSFDTISILSGSMDQLSVGSMEDSGILKGSKTWLEELESTIDDLIEVKKIGAKEREEHLEKIYVICTRHYAKRISENVASLEELLLKIFNGPRSDKELILTIRIMCTFCLASVFQVEELWTKTEGRFNALANDAESSGIKCESILCFSLLTALLDSEADVIEFGDFLISILESDGAVVNSEDDEGVVGCACQALGLLLTCVTTESEFLASAAEALSEQLDAASIDVQLAAGQALAALFERVNEIRPDKDEENDESDVSQTSKFDDIIPDRNQLLITLRDLASESSKSIGKKQRKVLHQVFRNVLQTIEEPNARNILRNSVRIGQSTVQLDSWKKILRAQMLRYVLGSSFSEYFAKSTFIRYFLGYSGYVAGLSSRDPDSDFDSDNVDEYIDDHKRGLSSTERRDLDRVRDKQKKQDQRVRADYINSVYFSQN.

Phosphoserine occurs at positions 393 and 397. Residues 411 to 431 form a disordered region; that stretch reads LSSTERRDLDRVRDKQKKQDQ.

The protein belongs to the IFRD family.

It localises to the cytoplasm. This is an uncharacterized protein from Schizosaccharomyces pombe (strain 972 / ATCC 24843) (Fission yeast).